The chain runs to 349 residues: 1-acylglycerol-3-phosphate O-acyltransferase ABHD5 (349 aa).

A2 carries the N-acetylalanine modification. The region spanning 77–184 is the AB hydrolase-1 domain; sequence PLVLLHGFGG…LVEPWGFPER (108 aa). At S122 the chain carries Phosphoserine. Residues 327-332 carry the HXXXXD motif motif; it reads HYVYAD.

This sequence belongs to the peptidase S33 family. ABHD4/ABHD5 subfamily. As to quaternary structure, interacts with ADRP, PLIN and PNPLA2. Interacts with PLIN5; promotes interaction with PNPLA2. Widely expressed in various tissues, including lymphocytes, liver, skeletal muscle and brain. Expressed by upper epidermal layers and dermal fibroblasts in skin, hepatocytes and neurons (at protein level).

It localises to the cytoplasm. It is found in the lipid droplet. The protein localises to the cytosol. It catalyses the reaction a 1-acyl-sn-glycero-3-phosphate + an acyl-CoA = a 1,2-diacyl-sn-glycero-3-phosphate + CoA. The enzyme catalyses 1-(9Z-octadecenoyl)-sn-glycero-3-phosphate + hexadecanoyl-CoA = 1-(9Z)-octadecenoyl-2-hexadecanoyl-sn-glycero-3-phosphate + CoA. It carries out the reaction 1-(9Z-octadecenoyl)-sn-glycero-3-phosphate + octadecanoyl-CoA = 1-(9Z-octadecenoyl)-2-octadecanoyl-sn-glycero-3-phosphate + CoA. The catalysed reaction is 1-(9Z-octadecenoyl)-sn-glycero-3-phosphate + (9Z)-octadecenoyl-CoA = 1,2-di-(9Z-octadecenoyl)-sn-glycero-3-phosphate + CoA. It catalyses the reaction 1-(9Z-octadecenoyl)-sn-glycero-3-phosphate + (5Z,8Z,11Z,14Z)-eicosatetraenoyl-CoA = 1-(9Z)-octadecenoyl-2-(5Z,8Z,11Z,14Z)-eicosatetraenoyl-sn-glycero-3-phosphate + CoA. The enzyme catalyses eicosanoyl-CoA + 1-(9Z-octadecenoyl)-sn-glycero-3-phosphate = 1-(9Z)-octadecenoyl-2-eicosanoyl-sn-glycero-3-phosphate + CoA. It carries out the reaction 1-hexadecanoyl-sn-glycero-3-phosphate + (9Z)-octadecenoyl-CoA = 1-hexadecanoyl-2-(9Z-octadecenoyl)-sn-glycero-3-phosphate + CoA. The catalysed reaction is 1-octadecanoyl-sn-glycero-3-phosphate + (9Z)-octadecenoyl-CoA = 1-octadecanoyl-2-(9Z-octadecenoyl)-sn-glycero-3-phosphate + CoA. It catalyses the reaction 1-(5Z,8Z,11Z,14Z-eicosatetraenoyl)-sn-glycero-3-phosphate + (9Z)-octadecenoyl-CoA = 1-(5Z,8Z,11Z,14Z)-eicosatetraenoyl-2-(9Z)-octadecenoyl-sn-glycero-3-phosphate + CoA. Its activity is regulated as follows. Acyltransferase activity is inhibited by detergents such as Triton X-100 and 3-[(3-cholamidopropyl)dimethylammonio]-1-propanesulfonate (CHAPS). Acyltransferase activity is inhibited by the presence of magnesium and calcium. Coenzyme A-dependent lysophosphatidic acid acyltransferase that catalyzes the transfer of an acyl group on a lysophosphatidic acid. Functions preferentially with 1-oleoyl-lysophosphatidic acid followed by 1-palmitoyl-lysophosphatidic acid, 1-stearoyl-lysophosphatidic acid and 1-arachidonoyl-lysophosphatidic acid as lipid acceptor. Functions preferentially with arachidonoyl-CoA followed by oleoyl-CoA as acyl group donors. Functions in phosphatidic acid biosynthesis. May regulate the cellular storage of triacylglycerol through activation of the phospholipase PNPLA2. Involved in keratinocyte differentiation. Regulates lipid droplet fusion. In Homo sapiens (Human), this protein is 1-acylglycerol-3-phosphate O-acyltransferase ABHD5.